A 304-amino-acid polypeptide reads, in one-letter code: Acetyl-coenzyme A carboxylase carboxyl transferase subunit beta (304 aa).

The CoA carboxyltransferase N-terminal domain occupies 25-294; the sequence is VWTKCDSCGQ…PSVVESKADT (270 aa). The Zn(2+) site is built by C29, C32, C48, and C51. A C4-type zinc finger spans residues 29–51; it reads CDSCGQVLYRAELERNLEVCPKC.

It belongs to the AccD/PCCB family. Acetyl-CoA carboxylase is a heterohexamer composed of biotin carboxyl carrier protein (AccB), biotin carboxylase (AccC) and two subunits each of ACCase subunit alpha (AccA) and ACCase subunit beta (AccD). The cofactor is Zn(2+).

The protein resides in the cytoplasm. The catalysed reaction is N(6)-carboxybiotinyl-L-lysyl-[protein] + acetyl-CoA = N(6)-biotinyl-L-lysyl-[protein] + malonyl-CoA. The protein operates within lipid metabolism; malonyl-CoA biosynthesis; malonyl-CoA from acetyl-CoA: step 1/1. Component of the acetyl coenzyme A carboxylase (ACC) complex. Biotin carboxylase (BC) catalyzes the carboxylation of biotin on its carrier protein (BCCP) and then the CO(2) group is transferred by the transcarboxylase to acetyl-CoA to form malonyl-CoA. The polypeptide is Acetyl-coenzyme A carboxylase carboxyl transferase subunit beta (Yersinia pestis (strain Pestoides F)).